The sequence spans 656 residues: DNA ligase (656 aa).

Residues 32–36 (DAVYD) and 81–82 (SL) each bind NAD(+). Lysine 112 (N6-AMP-lysine intermediate) is an active-site residue. Positions 133, 167, and 306 each coordinate NAD(+). Cysteine 400, cysteine 403, cysteine 416, and cysteine 421 together coordinate Zn(2+). The BRCT domain maps to 577-656 (KSSSVFNNKT…ELLKRLKELD (80 aa)).

It belongs to the NAD-dependent DNA ligase family. LigA subfamily. Mg(2+) is required as a cofactor. Mn(2+) serves as cofactor.

The enzyme catalyses NAD(+) + (deoxyribonucleotide)n-3'-hydroxyl + 5'-phospho-(deoxyribonucleotide)m = (deoxyribonucleotide)n+m + AMP + beta-nicotinamide D-nucleotide.. Functionally, DNA ligase that catalyzes the formation of phosphodiester linkages between 5'-phosphoryl and 3'-hydroxyl groups in double-stranded DNA using NAD as a coenzyme and as the energy source for the reaction. It is essential for DNA replication and repair of damaged DNA. The sequence is that of DNA ligase from Helicobacter pylori (strain HPAG1).